The primary structure comprises 562 residues: Probable sesquiterpene synthase (562 aa).

Mg(2+)-binding residues include D315, D319, and E467. A DDXXD motif motif is present at residues 315-319; sequence DDIYD.

It belongs to the terpene synthase family. Tpsa subfamily. Mg(2+) is required as a cofactor. It depends on Mn(2+) as a cofactor.

In terms of biological role, sesquiterpene synthase. This is Probable sesquiterpene synthase (SesquiTPS) from Santalum austrocaledonicum (Sandalwood).